Consider the following 472-residue polypeptide: Uronate isomerase (472 aa).

The protein belongs to the metallo-dependent hydrolases superfamily. Uronate isomerase family.

It catalyses the reaction D-glucuronate = D-fructuronate. The enzyme catalyses aldehydo-D-galacturonate = keto-D-tagaturonate. It participates in carbohydrate metabolism; pentose and glucuronate interconversion. The protein is Uronate isomerase of Shouchella clausii (strain KSM-K16) (Alkalihalobacillus clausii).